A 199-amino-acid polypeptide reads, in one-letter code: GTP cyclohydrolase-2 (199 aa).

Arginine 50–glutamate 54 contacts GTP. The Zn(2+) site is built by cysteine 55, cysteine 66, and cysteine 68. Residues glutamine 71, glutamate 93–arginine 95, and threonine 115 each bind GTP. The active-site Proton acceptor is aspartate 127. The active-site Nucleophile is arginine 129. Residues threonine 150 and lysine 155 each contribute to the GTP site.

It belongs to the GTP cyclohydrolase II family. In terms of assembly, homodimer. The cofactor is Zn(2+).

It carries out the reaction GTP + 4 H2O = 2,5-diamino-6-hydroxy-4-(5-phosphoribosylamino)-pyrimidine + formate + 2 phosphate + 3 H(+). It functions in the pathway cofactor biosynthesis; riboflavin biosynthesis; 5-amino-6-(D-ribitylamino)uracil from GTP: step 1/4. Its function is as follows. Catalyzes the conversion of GTP to 2,5-diamino-6-ribosylamino-4(3H)-pyrimidinone 5'-phosphate (DARP), formate and pyrophosphate. The protein is GTP cyclohydrolase-2 of Buchnera aphidicola subsp. Baizongia pistaciae (strain Bp).